Here is a 139-residue protein sequence, read N- to C-terminus: Ribonuclease homolog (139 aa).

An N-terminal signal peptide occupies residues 1–23; that stretch reads MAMSSLWWTAILLLALTVSMCYG. The active-site Proton acceptor is H34. Cystine bridges form between C49-C102, C64-C111, and C82-C126. Position 65-69 (65-69) interacts with substrate; it reads KSFNT. H133 (proton donor) is an active-site residue.

It belongs to the pancreatic ribonuclease family.

Its subcellular location is the secreted. This chain is Ribonuclease homolog, found in Gallus gallus (Chicken).